A 259-amino-acid chain; its full sequence is Deoxyribose-phosphate aldolase (259 aa).

Aspartate 102 serves as the catalytic Proton donor/acceptor. Lysine 167 functions as the Schiff-base intermediate with acetaldehyde in the catalytic mechanism. The Proton donor/acceptor role is filled by lysine 201.

It belongs to the DeoC/FbaB aldolase family. DeoC type 2 subfamily.

It localises to the cytoplasm. The enzyme catalyses 2-deoxy-D-ribose 5-phosphate = D-glyceraldehyde 3-phosphate + acetaldehyde. The protein operates within carbohydrate degradation; 2-deoxy-D-ribose 1-phosphate degradation; D-glyceraldehyde 3-phosphate and acetaldehyde from 2-deoxy-alpha-D-ribose 1-phosphate: step 2/2. In terms of biological role, catalyzes a reversible aldol reaction between acetaldehyde and D-glyceraldehyde 3-phosphate to generate 2-deoxy-D-ribose 5-phosphate. The sequence is that of Deoxyribose-phosphate aldolase from Serratia proteamaculans (strain 568).